The chain runs to 149 residues: Ribonuclease H (149 aa).

The 142-residue stretch at 1–142 (MSDSVELFTD…ADQLANRGVD (142 aa)) folds into the RNase H type-1 domain. Positions 10, 48, 70, and 134 each coordinate Mg(2+).

This sequence belongs to the RNase H family. In terms of assembly, monomer. Requires Mg(2+) as cofactor.

The protein localises to the cytoplasm. It catalyses the reaction Endonucleolytic cleavage to 5'-phosphomonoester.. Its function is as follows. Endonuclease that specifically degrades the RNA of RNA-DNA hybrids. This Pseudomonas savastanoi pv. phaseolicola (strain 1448A / Race 6) (Pseudomonas syringae pv. phaseolicola (strain 1448A / Race 6)) protein is Ribonuclease H.